The sequence spans 153 residues: Probable phospholipase A2 homolog 2 (153 aa).

The signal sequence occupies residues 1–25 (MRFFLKLAPRCSVLLLLLLVTASRG). 6 disulfides stabilise this stretch: C42/C70, C46/C76, C51/C123, C63/C83, C82/C109, and C89/C102. The Ca(2+) site is built by Y62, G64, and Y67. H86 is an active-site residue. D87 provides a ligand contact to Ca(2+).

It belongs to the phospholipase A2 family. It depends on Ca(2+) as a cofactor.

The protein localises to the secreted. It carries out the reaction a 1,2-diacyl-sn-glycero-3-phosphocholine + H2O = a 1-acyl-sn-glycero-3-phosphocholine + a fatty acid + H(+). PA2 catalyzes the calcium-dependent hydrolysis of the 2-acyl groups in 3-sn-phosphoglycerides. Releases lysophospholipids (LPLs) and free fatty acids (FFAs) from membrane phospholipids in response to hormones and other external stimuli. This Oryza sativa subsp. japonica (Rice) protein is Probable phospholipase A2 homolog 2 (PLA2-II).